Reading from the N-terminus, the 367-residue chain is Heat-inducible transcription repressor HrcA (367 aa).

Belongs to the HrcA family.

In terms of biological role, negative regulator of class I heat shock genes (grpE-dnaK-dnaJ and groELS operons). Prevents heat-shock induction of these operons. This Acaryochloris marina (strain MBIC 11017) protein is Heat-inducible transcription repressor HrcA.